A 348-amino-acid polypeptide reads, in one-letter code: Alcohol dehydrogenase 1 (348 aa).

Residues cysteine 44, histidine 67, cysteine 98, cysteine 101, cysteine 104, cysteine 112, and cysteine 154 each coordinate Zn(2+). NAD(+) contacts are provided by residues 178–184, aspartate 202, lysine 207, 269–271, and arginine 341; these read GAGGGLG and VGL.

Belongs to the zinc-containing alcohol dehydrogenase family. In terms of assembly, homotetramer. It depends on Zn(2+) as a cofactor.

The protein resides in the cytoplasm. It carries out the reaction a primary alcohol + NAD(+) = an aldehyde + NADH + H(+). The enzyme catalyses a secondary alcohol + NAD(+) = a ketone + NADH + H(+). Converts ethanol to acetaldehyde and plays a major role in xylose fermentation. The polypeptide is Alcohol dehydrogenase 1 (ADH1) (Scheffersomyces stipitis (strain ATCC 58785 / CBS 6054 / NBRC 10063 / NRRL Y-11545) (Yeast)).